Reading from the N-terminus, the 188-residue chain is Putative manganese efflux pump MntP (188 aa).

The next 6 membrane-spanning stretches (helical) occupy residues 8–28, 39–59, 68–88, 106–126, 131–151, and 164–184; these read CLGLGLAADAFAVSLSSGFVI, IALFFGIFQAIMPLIGWLTGL, IDHWIAFILLLGIGSKMIYEA, LLALAIATSIDALAAGLGLSL, ILLPCTLIGLITFVLSFIGVF, and IEIIGGLTLIIIGSKILIEDL.

It belongs to the MntP (TC 9.B.29) family.

It localises to the cell inner membrane. Functionally, probably functions as a manganese efflux pump. The sequence is that of Putative manganese efflux pump MntP from Crocosphaera subtropica (strain ATCC 51142 / BH68) (Cyanothece sp. (strain ATCC 51142)).